A 270-amino-acid polypeptide reads, in one-letter code: Phosphoribosylformylglycinamidine synthase subunit PurQ (270 aa).

The Glutamine amidotransferase type-1 domain maps to 5–251 (ALVLHATGTN…VIRERDSEEE (247 aa)). Catalysis depends on Cys95, which acts as the Nucleophile. Residues His236 and Glu238 contribute to the active site.

Part of the FGAM synthase complex composed of 1 PurL, 1 PurQ and 2 PurS subunits.

Its subcellular location is the cytoplasm. It catalyses the reaction N(2)-formyl-N(1)-(5-phospho-beta-D-ribosyl)glycinamide + L-glutamine + ATP + H2O = 2-formamido-N(1)-(5-O-phospho-beta-D-ribosyl)acetamidine + L-glutamate + ADP + phosphate + H(+). It carries out the reaction L-glutamine + H2O = L-glutamate + NH4(+). It participates in purine metabolism; IMP biosynthesis via de novo pathway; 5-amino-1-(5-phospho-D-ribosyl)imidazole from N(2)-formyl-N(1)-(5-phospho-D-ribosyl)glycinamide: step 1/2. In terms of biological role, part of the phosphoribosylformylglycinamidine synthase complex involved in the purines biosynthetic pathway. Catalyzes the ATP-dependent conversion of formylglycinamide ribonucleotide (FGAR) and glutamine to yield formylglycinamidine ribonucleotide (FGAM) and glutamate. The FGAM synthase complex is composed of three subunits. PurQ produces an ammonia molecule by converting glutamine to glutamate. PurL transfers the ammonia molecule to FGAR to form FGAM in an ATP-dependent manner. PurS interacts with PurQ and PurL and is thought to assist in the transfer of the ammonia molecule from PurQ to PurL. The polypeptide is Phosphoribosylformylglycinamidine synthase subunit PurQ (Treponema denticola (strain ATCC 35405 / DSM 14222 / CIP 103919 / JCM 8153 / KCTC 15104)).